The chain runs to 518 residues: Prosaposin (518 aa).

The signal sequence occupies residues 1 to 17 (MARRLLTLLGLLAAAVA). Residues 18–60 (SPVLWQKDCAKGPEVWCQSLRTASQCGAVKHCQQNVWSKPAVN) constitute a propeptide that is removed on maturation. The Saposin A-type 1 domain occupies 19-59 (PVLWQKDCAKGPEVWCQSLRTASQCGAVKHCQQNVWSKPAV). Saposin B-type domains lie at 60 to 143 (NSIP…QSLQ), 193 to 277 (TEDV…PSVK), 307 to 388 (TFSV…AANK), and 399 to 480 (AGGF…GAAK). Disulfide bonds link cysteine 64–cysteine 139, cysteine 67–cysteine 133, and cysteine 95–cysteine 107. N-linked (GlcNAc...) asparagine glycosylation occurs at asparagine 81. A propeptide spanning residues 144-193 (KHLAAMKLQKQLQSNKIPELDFSELTSPFMANVPLLLYPQDKPKQKSKAT) is cleaved from the precursor. 3 disulfides stabilise this stretch: cysteine 197/cysteine 273, cysteine 200/cysteine 267, and cysteine 229/cysteine 240. An N-linked (GlcNAc...) asparagine glycan is attached at asparagine 214. The propeptide occupies 277 to 306 (KSVPLQTLVPAQVVHEVKMETVEKATVQEK). 3 disulfides stabilise this stretch: cysteine 311/cysteine 384, cysteine 314/cysteine 378, and cysteine 342/cysteine 353. Residue asparagine 328 is glycosylated (N-linked (GlcNAc...) asparagine). Positions 388–398 (KPPQQPVVVKP) are excised as a propeptide. 3 disulfide bridges follow: cysteine 403–cysteine 476, cysteine 406–cysteine 470, and cysteine 434–cysteine 445. A glycan (N-linked (GlcNAc...) asparagine) is linked at asparagine 420. Positions 480-518 (KKPLLGEDACVWGPGYWCKNMETAAQCNAVDHCRRHVWN) are excised as a propeptide. The Saposin A-type 2 domain maps to 482-518 (PLLGEDACVWGPGYWCKNMETAAQCNAVDHCRRHVWN).

In terms of assembly, saposin-B is a homodimer. This precursor is proteolytically processed to 4 small peptides, which are similar to each other and are sphingolipid hydrolase activator proteins.

The protein resides in the lysosome. Its subcellular location is the secreted. Functionally, the lysosomal degradation of sphingolipids takes place by the sequential action of specific hydrolases. Some of these enzymes require specific low-molecular mass, non-enzymatic proteins: the sphingolipids activator proteins (coproteins). In terms of biological role, saposin-A and saposin-C stimulate the hydrolysis of glucosylceramide by beta-glucosylceramidase (EC 3.2.1.45) and galactosylceramide by beta-galactosylceramidase (EC 3.2.1.46). Saposin-C apparently acts by combining with the enzyme and acidic lipid to form an activated complex, rather than by solubilizing the substrate. Saposin-B stimulates the hydrolysis of galacto-cerebroside sulfate by arylsulfatase A (EC 3.1.6.8), GM1 gangliosides by beta-galactosidase (EC 3.2.1.23) and globotriaosylceramide by alpha-galactosidase A (EC 3.2.1.22). Saposin-B forms a solubilizing complex with the substrates of the sphingolipid hydrolases. Its function is as follows. Saposin-D is a specific sphingomyelin phosphodiesterase activator (EC 3.1.4.12). In Gallus gallus (Chicken), this protein is Prosaposin (PSAP).